A 262-amino-acid polypeptide reads, in one-letter code: Taurine import ATP-binding protein TauB (262 aa).

An ABC transporter domain is found at 4 to 233; that stretch reads LELERISAQY…RYAAGESARA (230 aa). 38 to 45 provides a ligand contact to ATP; that stretch reads GPSGSGKT.

This sequence belongs to the ABC transporter superfamily. Taurine importer (TC 3.A.1.17.1) family. As to quaternary structure, the complex is composed of two ATP-binding proteins (TauB), two transmembrane proteins (TauC) and a solute-binding protein (TauA).

Its subcellular location is the cell inner membrane. It carries out the reaction taurine(out) + ATP + H2O = taurine(in) + ADP + phosphate + H(+). In terms of biological role, part of the ABC transporter complex TauABC involved in taurine import. Responsible for energy coupling to the transport system. The chain is Taurine import ATP-binding protein TauB from Pseudomonas putida (strain ATCC 47054 / DSM 6125 / CFBP 8728 / NCIMB 11950 / KT2440).